Reading from the N-terminus, the 122-residue chain is UPF0102 protein xcc-b100_3645 (122 aa).

It belongs to the UPF0102 family.

The chain is UPF0102 protein xcc-b100_3645 from Xanthomonas campestris pv. campestris (strain B100).